The chain runs to 343 residues: MGNTVTCCVSPDASPKAGRDRAVTERGEPYQAQVELQETDPGPHLQHISDREFPVDFHDEPNPSDHPQASTIFLSKSQTDVREKRKSNHINHVSPGQLTKKYSSCSTIFLDDSTVSQPNLRSTIKCVTLAIYYHIKNRDSDRSLEIFDEKLHPLTREEVADDYCKHDPDHKHIYRFVRTLFSAAQLTAECAIVTLVYLERLLTYAEIDICPSNWKRIVLGAILLASKVWDDQAVWNVDYCQILKDITVEDMNEMERHFLELLQFNINVPASVYAKYYFDLRSLADDNNLSFLLEPLSKERAQKLEAISRLCEDKYKDLSKAAMRRSISADNLVGIRRSNAIIS.

Residues Met-1–Ile-48 form a disordered region. Residues Ala-17 to Glu-28 show a composition bias toward basic and acidic residues. One can recognise a Cyclin N-terminal domain in the interval Glu-145–Asn-267.

It belongs to the cyclin family. Cyclin Y subfamily.

It is found in the cell membrane. Functionally, key regulator of Wnt signaling implicated in various biological processes, such as embryonic neurogenesis. In Xenopus tropicalis (Western clawed frog), this protein is Cyclin-Y-like protein 1 (ccnyl1).